The sequence spans 256 residues: Pimeloyl-[acyl-carrier protein] methyl ester esterase (256 aa).

The 228-residue stretch at 15 to 242 (HLVLLHGWGL…AAHAPFISHP (228 aa)) folds into the AB hydrolase-1 domain. Substrate contacts are provided by residues Trp-22, 82–83 (SL), and 143–147 (FLALQ). Residue Ser-82 is the Nucleophile of the active site. Active-site residues include Asp-207 and His-235. His-235 is a binding site for substrate.

Belongs to the AB hydrolase superfamily. Carboxylesterase BioH family. As to quaternary structure, monomer.

The protein localises to the cytoplasm. It catalyses the reaction 6-carboxyhexanoyl-[ACP] methyl ester + H2O = 6-carboxyhexanoyl-[ACP] + methanol + H(+). It participates in cofactor biosynthesis; biotin biosynthesis. Functionally, the physiological role of BioH is to remove the methyl group introduced by BioC when the pimeloyl moiety is complete. It allows to synthesize pimeloyl-ACP via the fatty acid synthetic pathway through the hydrolysis of the ester bonds of pimeloyl-ACP esters. This chain is Pimeloyl-[acyl-carrier protein] methyl ester esterase, found in Escherichia coli O81 (strain ED1a).